The following is a 111-amino-acid chain: Wound-induced proteinase inhibitor 1 (111 aa).

A signal peptide spans 1–23 (MEAKFAHIILFFLLAFSFETLMA). The propeptide occupies 24-36 (RKESDGPEVIKLL).

It belongs to the protease inhibitor I13 (potato type I serine protease inhibitor) family.

It is found in the secreted. The chain is Wound-induced proteinase inhibitor 1 from Solanum peruvianum (Peruvian tomato).